A 654-amino-acid chain; its full sequence is tRNA 5-methylaminomethyl-2-thiouridine biosynthesis bifunctional protein MnmC (654 aa).

The tRNA (mnm(5)s(2)U34)-methyltransferase stretch occupies residues 1–236 (MTDRIVPATL…KRAMLVGEFA (236 aa)). The FAD-dependent cmnm(5)s(2)U34 oxidoreductase stretch occupies residues 260 to 654 (IGAGLAGCAA…IRALRRGRVA (395 aa)).

In the N-terminal section; belongs to the methyltransferase superfamily. tRNA (mnm(5)s(2)U34)-methyltransferase family. This sequence in the C-terminal section; belongs to the DAO family. FAD serves as cofactor.

Its subcellular location is the cytoplasm. The enzyme catalyses 5-aminomethyl-2-thiouridine(34) in tRNA + S-adenosyl-L-methionine = 5-methylaminomethyl-2-thiouridine(34) in tRNA + S-adenosyl-L-homocysteine + H(+). Functionally, catalyzes the last two steps in the biosynthesis of 5-methylaminomethyl-2-thiouridine (mnm(5)s(2)U) at the wobble position (U34) in tRNA. Catalyzes the FAD-dependent demodification of cmnm(5)s(2)U34 to nm(5)s(2)U34, followed by the transfer of a methyl group from S-adenosyl-L-methionine to nm(5)s(2)U34, to form mnm(5)s(2)U34. This Burkholderia thailandensis (strain ATCC 700388 / DSM 13276 / CCUG 48851 / CIP 106301 / E264) protein is tRNA 5-methylaminomethyl-2-thiouridine biosynthesis bifunctional protein MnmC.